Reading from the N-terminus, the 475-residue chain is MKITLPEFGKARVLVVGDVMLDRYWHGPTGRISPEAPVPVVKVEHIEERPGGAANVALNSAALGAHAVLLGLTGQDEAADALAGQMAGVKVACDFVRLADYPTITKLRVLSRNQQLLRLDFEEAFHDVDSTLLMNKVEQALPSSDVMILSDYGKGALNDVPGMIQRARAAGIPVLVDPKGTEFEKYRGATLLTPNMSEFEAVVGKVKGEEDLVAKGLALVKRFELEALLVTRSENGMTLIREGQPELHLPAQAHEVYDVTGAGDTVISTLATSLAAGMSLDEACALANTAAGIVVGKLGTSTVSPVELANALYTEQETGFGVMSEAQLKIAVQAARLRGEKVVMTNGCFDILHAGHVSYLANAGKLGDRLIVAVNTDGSVRRLKGPGRPVNSTDRRMAVLAGLGAVDWVVPFAEDTPQRLIAEVLPDLLVKGGDYKPKDIAGYDEVTANGGEVRVLNFEDGCSTSDIIKTIRERG.

The ribokinase stretch occupies residues 1 to 318 (MKITLPEFGK…ANALYTEQET (318 aa)). 195–198 (NMSE) is a binding site for ATP. Asp264 is an active-site residue. The tract at residues 344–475 (MTNGCFDILH…DIIKTIRERG (132 aa)) is cytidylyltransferase.

It in the N-terminal section; belongs to the carbohydrate kinase PfkB family. The protein in the C-terminal section; belongs to the cytidylyltransferase family. As to quaternary structure, homodimer.

The catalysed reaction is D-glycero-beta-D-manno-heptose 7-phosphate + ATP = D-glycero-beta-D-manno-heptose 1,7-bisphosphate + ADP + H(+). The enzyme catalyses D-glycero-beta-D-manno-heptose 1-phosphate + ATP + H(+) = ADP-D-glycero-beta-D-manno-heptose + diphosphate. It participates in nucleotide-sugar biosynthesis; ADP-L-glycero-beta-D-manno-heptose biosynthesis; ADP-L-glycero-beta-D-manno-heptose from D-glycero-beta-D-manno-heptose 7-phosphate: step 1/4. It functions in the pathway nucleotide-sugar biosynthesis; ADP-L-glycero-beta-D-manno-heptose biosynthesis; ADP-L-glycero-beta-D-manno-heptose from D-glycero-beta-D-manno-heptose 7-phosphate: step 3/4. Functionally, catalyzes the phosphorylation of D-glycero-D-manno-heptose 7-phosphate at the C-1 position to selectively form D-glycero-beta-D-manno-heptose-1,7-bisphosphate. Catalyzes the ADP transfer from ATP to D-glycero-beta-D-manno-heptose 1-phosphate, yielding ADP-D-glycero-beta-D-manno-heptose. This Aeromonas salmonicida (strain A449) protein is Bifunctional protein HldE.